Reading from the N-terminus, the 204-residue chain is Cobalt-containing nitrile hydratase subunit alpha (204 aa).

The Co(2+) site is built by Cys-108, Cys-111, Ser-112, and Cys-113. Cys-111 bears the Cysteine sulfinic acid (-SO2H) mark. Residue Cys-113 is modified to Cysteine sulfenic acid (-SOH).

Belongs to the nitrile hydratase subunit alpha family. In terms of assembly, heterotetramer of two alpha and two beta chains. Co(2+) serves as cofactor.

The enzyme catalyses an aliphatic primary amide = an aliphatic nitrile + H2O. Its function is as follows. NHase catalyzes the hydration of various nitrile compounds to the corresponding amides. In Pseudonocardia thermophila, this protein is Cobalt-containing nitrile hydratase subunit alpha.